An 80-amino-acid chain; its full sequence is Exodeoxyribonuclease 7 small subunit (80 aa).

It belongs to the XseB family. As to quaternary structure, heterooligomer composed of large and small subunits.

The protein resides in the cytoplasm. The catalysed reaction is Exonucleolytic cleavage in either 5'- to 3'- or 3'- to 5'-direction to yield nucleoside 5'-phosphates.. In terms of biological role, bidirectionally degrades single-stranded DNA into large acid-insoluble oligonucleotides, which are then degraded further into small acid-soluble oligonucleotides. The protein is Exodeoxyribonuclease 7 small subunit of Klebsiella pneumoniae (strain 342).